Reading from the N-terminus, the 81-residue chain is Photosystem I iron-sulfur center (81 aa).

2 consecutive 4Fe-4S ferredoxin-type domains span residues serine 2–tryptophan 31 and isoleucine 39–tyrosine 68. Positions 11, 14, 17, 21, 48, 51, 54, and 58 each coordinate [4Fe-4S] cluster.

The eukaryotic PSI reaction center is composed of at least 11 subunits. Requires [4Fe-4S] cluster as cofactor.

It is found in the plastid. The protein localises to the chloroplast thylakoid membrane. The catalysed reaction is reduced [plastocyanin] + hnu + oxidized [2Fe-2S]-[ferredoxin] = oxidized [plastocyanin] + reduced [2Fe-2S]-[ferredoxin]. In terms of biological role, apoprotein for the two 4Fe-4S centers FA and FB of photosystem I (PSI); essential for photochemical activity. FB is the terminal electron acceptor of PSI, donating electrons to ferredoxin. The C-terminus interacts with PsaA/B/D and helps assemble the protein into the PSI complex. Required for binding of PsaD and PsaE to PSI. PSI is a plastocyanin-ferredoxin oxidoreductase, converting photonic excitation into a charge separation, which transfers an electron from the donor P700 chlorophyll pair to the spectroscopically characterized acceptors A0, A1, FX, FA and FB in turn. The sequence is that of Photosystem I iron-sulfur center from Spinacia oleracea (Spinach).